A 92-amino-acid polypeptide reads, in one-letter code: Neuropeptide ShK-like2 (92 aa).

Residues 1–23 (MTTIRCVLFAVLLFAYCALLIKA) form the signal peptide. Residues 24–51 (RSIDAEAEKTWQEEETKTVAEKSPLKKR) constitute a propeptide that is removed on maturation. 3 disulfides stabilise this stretch: Cys-53-Cys-92, Cys-61-Cys-85, and Cys-70-Cys-89.

As to expression, transcripts are first expressed mostly in the endoderm (with rare ectodermal cells) in the late planulae. They are mostly expressed in endodermal ganglion cells in the body column and tentacles in primary polyps, as well as in a small number of ectodermal sensory neurons in tentacles and body wall. They are not expressed in nematocytes. In terms of tissue distribution, transcripts are predominantly expressed in ectodermal sensory neurons in early and late planulae. They are expressed in endodermal ganglion cells in the body column and tentacles in primary polyps, as well as in a small number of ectodermal neurons in pharynx. They are not expressed in nematocytes.

Its function is as follows. In vivo, this neuropeptide induces contraction paralysis followed by death (within 2 hours) on 4 zebrafish larvae on the 15 tested. Also induces body contraction in Nematostella 11-dpf polyps. The protein is Neuropeptide ShK-like2 of Nematostella vectensis (Starlet sea anemone).